A 237-amino-acid polypeptide reads, in one-letter code: GrpE protein homolog, mitochondrial (237 aa).

It belongs to the GrpE family. As to quaternary structure, probable component of the PAM complex at least composed of a mitochondrial HSP70 protein, GrpE, tim-44, tim-16 and tim-14/dnj-21.

It is found in the mitochondrion matrix. Its function is as follows. Essential component of the PAM complex, a complex required for the translocation of transit peptide-containing proteins from the inner membrane into the mitochondrial matrix in an ATP-dependent manner. Seems to control the nucleotide-dependent binding of mitochondrial HSP70 to substrate proteins. The polypeptide is GrpE protein homolog, mitochondrial (Caenorhabditis elegans).